A 145-amino-acid chain; its full sequence is Large ribosomal subunit protein uL15 (145 aa).

The tract at residues 20–54 (GRGMASGKGKTATRGHKGQNSRSGGGVRPGFEGGQ) is disordered. Residues 42–52 (SGGGVRPGFEG) show a composition bias toward gly residues.

Belongs to the universal ribosomal protein uL15 family. As to quaternary structure, part of the 50S ribosomal subunit.

Binds to the 23S rRNA. This is Large ribosomal subunit protein uL15 from Mycoplasma mycoides subsp. mycoides SC (strain CCUG 32753 / NCTC 10114 / PG1).